The primary structure comprises 208 residues: NAD(P)H-quinone oxidoreductase subunit I (208 aa).

4Fe-4S ferredoxin-type domains are found at residues 55-84 and 95-124; these read GRIHYEFDKCIACEVCVRVCPINLPVVDWV and RNYSIDFGVCIFCGNCVEYCPTNCLSMTEE. Positions 64, 67, 70, 74, 104, 107, 110, and 114 each coordinate [4Fe-4S] cluster.

It belongs to the complex I 23 kDa subunit family. In terms of assembly, NDH-1 is composed of at least 11 different subunits. It depends on [4Fe-4S] cluster as a cofactor.

It localises to the cellular thylakoid membrane. The catalysed reaction is a plastoquinone + NADH + (n+1) H(+)(in) = a plastoquinol + NAD(+) + n H(+)(out). It carries out the reaction a plastoquinone + NADPH + (n+1) H(+)(in) = a plastoquinol + NADP(+) + n H(+)(out). In terms of biological role, NDH-1 shuttles electrons from an unknown electron donor, via FMN and iron-sulfur (Fe-S) centers, to quinones in the respiratory and/or the photosynthetic chain. The immediate electron acceptor for the enzyme in this species is believed to be plastoquinone. Couples the redox reaction to proton translocation, and thus conserves the redox energy in a proton gradient. The protein is NAD(P)H-quinone oxidoreductase subunit I of Prochlorococcus marinus subsp. pastoris (strain CCMP1986 / NIES-2087 / MED4).